The following is a 187-amino-acid chain: Elongation factor P (187 aa).

It belongs to the elongation factor P family.

The protein localises to the cytoplasm. Its pathway is protein biosynthesis; polypeptide chain elongation. Involved in peptide bond synthesis. Stimulates efficient translation and peptide-bond synthesis on native or reconstituted 70S ribosomes in vitro. Probably functions indirectly by altering the affinity of the ribosome for aminoacyl-tRNA, thus increasing their reactivity as acceptors for peptidyl transferase. This Mycobacterium leprae (strain Br4923) protein is Elongation factor P.